The sequence spans 958 residues: Coiled-coil domain-containing protein 33 (958 aa).

A C2 domain is found at 214–353; it reads SPEEPLIASQ…LVKPTESGKA (140 aa). Positions 602–617 are enriched in polar residues; that stretch reads SKDTVSSTMDLSTSTP. Residues 602–628 are disordered; that stretch reads SKDTVSSTMDLSTSTPREAEEEPLVPE. Coiled-coil stretches lie at residues 632-774 and 859-899; these read DTEM…LEDR and FNLL…RLQE. A disordered region spans residues 899–958; that stretch reads EQEKGFRHPSNSIIIEQPSALTHSMDLKQPSELEPLLPSSDSKLNKPLSPQKETANSQQT. Composition is skewed to polar residues over residues 907–920 and 949–958; these read PSNSIIIEQPSALT and QKETANSQQT.

The protein is Coiled-coil domain-containing protein 33 (CCDC33) of Homo sapiens (Human).